A 635-amino-acid polypeptide reads, in one-letter code: UvrABC system protein C (635 aa).

The segment covering Met1–Ser14 has biased composition (polar residues). A disordered region spans residues Met1–Gly27. The GIY-YIG domain maps to Ser40–Val117. Positions Thr227 to Val262 constitute a UVR domain.

Belongs to the UvrC family. As to quaternary structure, interacts with UvrB in an incision complex.

It localises to the cytoplasm. The UvrABC repair system catalyzes the recognition and processing of DNA lesions. UvrC both incises the 5' and 3' sides of the lesion. The N-terminal half is responsible for the 3' incision and the C-terminal half is responsible for the 5' incision. This is UvrABC system protein C from Ruegeria sp. (strain TM1040) (Silicibacter sp.).